The following is a 391-amino-acid chain: Cold-shock protein CS120 (391 aa).

Repeat copies occupy residues Gly-9 to Glu-31, Thr-49 to Thr-62, Gly-72 to Gln-94, Thr-95 to Ala-108, Thr-115 to Ala-128, Thr-135 to Thr-148, Gly-156 to Gln-178, Thr-179 to Ala-192, Gly-199 to Thr-212, Gly-220 to Gln-242, Thr-243 to Ala-256, Gly-263 to Thr-276, Gly-284 to Gln-306, Thr-307 to Ala-320, Gly-327 to Ile-340, Thr-350 to Thr-363, and Gly-374 to His-391. The interval Gly-9–His-391 is 6 X 23 AA approximate repeats. The segment covering Lys-21–Ala-33 has biased composition (basic and acidic residues). The interval Lys-21–His-391 is disordered. The segment covering Gly-34–Ala-59 has biased composition (low complexity). Residues Thr-49–Thr-363 are 11 X 14 AA approximate repeats. The span at His-70–His-92 shows a compositional bias: basic and acidic residues. The span at Gln-93–Thr-145 shows a compositional bias: low complexity. The span at Thr-155 to His-176 shows a compositional bias: basic and acidic residues. The segment covering Gln-177–Thr-196 has biased composition (low complexity). Over residues Thr-219–His-240 the composition is skewed to basic and acidic residues. Composition is skewed to low complexity over residues Gln-241–Thr-260 and His-272–Ser-282. The segment covering Thr-283–His-304 has biased composition (basic and acidic residues). Composition is skewed to low complexity over residues Gln-305–Thr-324 and Gln-333–Gly-351. Positions Gly-361 to Gly-372 are enriched in gly residues. The segment covering Ile-373–His-391 has biased composition (basic and acidic residues).

The protein belongs to the plant dehydrin family.

May reduce intracellular freezing damage during winter by hydrogen-bonding to the lattice of the nascent ice crystals, thus modifying the structure and/or propagation of ice crystals. The sequence is that of Cold-shock protein CS120 (CS120) from Triticum aestivum (Wheat).